Consider the following 240-residue polypeptide: ATP-dependent dethiobiotin synthetase BioD (240 aa).

Position 15–20 (15–20 (EIGKTF)) interacts with ATP. A Mg(2+)-binding site is contributed by threonine 19. Lysine 40 is an active-site residue. ATP-binding positions include aspartate 57, 118-121 (EGVG), and 178-179 (NR). Residues aspartate 57 and glutamate 118 each contribute to the Mg(2+) site.

It belongs to the dethiobiotin synthetase family. Homodimer. Mg(2+) serves as cofactor.

The protein resides in the cytoplasm. The catalysed reaction is (7R,8S)-7,8-diammoniononanoate + CO2 + ATP = (4R,5S)-dethiobiotin + ADP + phosphate + 3 H(+). The protein operates within cofactor biosynthesis; biotin biosynthesis; biotin from 7,8-diaminononanoate: step 1/2. Its function is as follows. Catalyzes a mechanistically unusual reaction, the ATP-dependent insertion of CO2 between the N7 and N8 nitrogen atoms of 7,8-diaminopelargonic acid (DAPA, also called 7,8-diammoniononanoate) to form a ureido ring. The sequence is that of ATP-dependent dethiobiotin synthetase BioD from Burkholderia mallei (strain NCTC 10247).